The primary structure comprises 480 residues: 3-isopropylmalate dehydratase large subunit (480 aa).

Positions 357, 417, and 420 each coordinate [4Fe-4S] cluster. The segment covering 431–441 (GQRCASTSNRN) has biased composition (polar residues). Residues 431–454 (GQRCASTSNRNFEGRQGKGGRTHL) are disordered.

This sequence belongs to the aconitase/IPM isomerase family. LeuC type 1 subfamily. As to quaternary structure, heterodimer of LeuC and LeuD. The cofactor is [4Fe-4S] cluster.

It catalyses the reaction (2R,3S)-3-isopropylmalate = (2S)-2-isopropylmalate. Its pathway is amino-acid biosynthesis; L-leucine biosynthesis; L-leucine from 3-methyl-2-oxobutanoate: step 2/4. In terms of biological role, catalyzes the isomerization between 2-isopropylmalate and 3-isopropylmalate, via the formation of 2-isopropylmaleate. This is 3-isopropylmalate dehydratase large subunit from Mycobacteroides abscessus (strain ATCC 19977 / DSM 44196 / CCUG 20993 / CIP 104536 / JCM 13569 / NCTC 13031 / TMC 1543 / L948) (Mycobacterium abscessus).